The primary structure comprises 221 residues: Ribosomal RNA small subunit methyltransferase Nep1 (221 aa).

S-adenosyl-L-methionine contacts are provided by residues glycine 174, glycine 179, and 196–201; that span reads VGDEPL.

Belongs to the class IV-like SAM-binding methyltransferase superfamily. RNA methyltransferase NEP1 family. In terms of assembly, homodimer.

The catalysed reaction is a pseudouridine in rRNA + S-adenosyl-L-methionine = an N(1)-methylpseudouridine in rRNA + S-adenosyl-L-homocysteine + H(+). In terms of biological role, methyltransferase involved in ribosomal biogenesis. Specifically catalyzes the N1-methylation of the pseudouridine corresponding to position 914 in M.jannaschii 16S rRNA. This Pyrobaculum neutrophilum (strain DSM 2338 / JCM 9278 / NBRC 100436 / V24Sta) (Thermoproteus neutrophilus) protein is Ribosomal RNA small subunit methyltransferase Nep1.